We begin with the raw amino-acid sequence, 428 residues long: D-amino acid dehydrogenase (428 aa).

Residue 3–17 (VVILGSGVVGVASAY) participates in FAD binding.

This sequence belongs to the DadA oxidoreductase family. It depends on FAD as a cofactor.

The catalysed reaction is a D-alpha-amino acid + A + H2O = a 2-oxocarboxylate + AH2 + NH4(+). Its pathway is amino-acid degradation; D-alanine degradation; NH(3) and pyruvate from D-alanine: step 1/1. Its function is as follows. Oxidative deamination of D-amino acids. The sequence is that of D-amino acid dehydrogenase from Burkholderia pseudomallei (strain 1106a).